Here is a 587-residue protein sequence, read N- to C-terminus: Complement component C8 beta chain (587 aa).

The signal sequence occupies residues 1-31 (MNHKLKPTVGLGYCLLCAALCLLLLRDVAIA). A propeptide spanning residues 32 to 44 (GSGEEPSGVREAR) is cleaved from the precursor. The region spanning 56-111 (DCVQSEWSSWTRCDVCRKKRYRYAKLVQPSQFGGEPCHVQGKEVEPCSPPSRYDCT) is the TSP type-1 1 domain. 5 disulfide bridges follow: Cys-57/Cys-92, Cys-68/Cys-102, Cys-71/Cys-110, Cys-118/Cys-129, and Cys-123/Cys-142. Residues Trp-62 and Trp-65 are each glycosylated (C-linked (Man) tryptophan). An LDL-receptor class A domain is found at 117–159 (LCEGFLCTYTGRCVPIDLRCNGDDDCGDWSAEKGSPKVPKACK). Residues Leu-134, Asn-137, Asp-139, Asp-141, and Glu-148 each coordinate Ca(2+). The region spanning 154 to 500 (VPKACKQEAQ…EYLEESSSCR (347 aa)) is the MACPF domain. Cys-158 and Cys-196 are disulfide-bonded. 4 consecutive transmembrane segments (beta stranded) span residues 248–255 (TTVSIGFA), 258–265 (GVAEFGFN), 375–382 (EQIVLKVG), and 388–395 (VYVTVGLE). Disulfide bonds link Cys-374/Cys-399, Cys-499/Cys-546, Cys-501/Cys-517, Cys-504/Cys-519, and Cys-521/Cys-530. Positions 501–531 (CAPCRNNGLAVLKGTRCECVCPSGYSGLGCE) constitute an EGF-like domain. One can recognise a TSP type-1 2 domain in the interval 541 to 587 (DGSWSCWGSWSPCRGRSKTRSRQCNNPAPSSGGIACRGLQMETTDCF). 2 C-linked (Man) tryptophan glycosylation sites follow: Trp-547 and Trp-550. Cysteines 553 and 586 form a disulfide.

The protein belongs to the complement C6/C7/C8/C9 family. Heterotrimer of 3 chains: alpha (C8A), beta (C8B) and gamma (C8G); the alpha and gamma chains are disulfide bonded. Component of the membrane attack complex (MAC), composed of complement C5b, C6, C7, C8A, C8B, C8G and multiple copies of the pore-forming subunit C9.

The protein resides in the secreted. It is found in the target cell membrane. Its function is as follows. Component of the membrane attack complex (MAC), a multiprotein complex activated by the complement cascade, which inserts into a target cell membrane and forms a pore, leading to target cell membrane rupture and cell lysis. The MAC is initiated by proteolytic cleavage of C5 into complement C5b in response to the classical, alternative, lectin and GZMK complement pathways. The complement pathways consist in a cascade of proteins that leads to phagocytosis and breakdown of pathogens and signaling that strengthens the adaptive immune system. C8B, together with C8A and C8G, inserts into the target membrane, but does not form pores by itself. During MAC assembly, associates with C5b, C6 and C7 to form the C5b8 intermediate complex that inserts into the target membrane and traverses the bilayer increasing membrane rigidity. In Oncorhynchus mykiss (Rainbow trout), this protein is Complement component C8 beta chain (c8b).